Consider the following 49-residue polypeptide: uncharacterized protein (49 aa).

A helical membrane pass occupies residues Ile-6 to Phe-28.

The protein resides in the membrane. This is an uncharacterized protein from Saccharomyces cerevisiae (strain ATCC 204508 / S288c) (Baker's yeast).